The following is a 100-amino-acid chain: Large ribosomal subunit protein uL23 (100 aa).

Belongs to the universal ribosomal protein uL23 family. As to quaternary structure, part of the 50S ribosomal subunit. Contacts protein L29, and trigger factor when it is bound to the ribosome.

In terms of biological role, one of the early assembly proteins it binds 23S rRNA. One of the proteins that surrounds the polypeptide exit tunnel on the outside of the ribosome. Forms the main docking site for trigger factor binding to the ribosome. The sequence is that of Large ribosomal subunit protein uL23 from Thermotoga maritima (strain ATCC 43589 / DSM 3109 / JCM 10099 / NBRC 100826 / MSB8).